The following is a 122-amino-acid chain: Large ribosomal subunit protein uL14 (122 aa).

The protein belongs to the universal ribosomal protein uL14 family. As to quaternary structure, part of the 50S ribosomal subunit. Forms a cluster with proteins L3 and L19. In the 70S ribosome, L14 and L19 interact and together make contacts with the 16S rRNA in bridges B5 and B8.

Binds to 23S rRNA. Forms part of two intersubunit bridges in the 70S ribosome. This Bradyrhizobium diazoefficiens (strain JCM 10833 / BCRC 13528 / IAM 13628 / NBRC 14792 / USDA 110) protein is Large ribosomal subunit protein uL14.